The following is a 225-amino-acid chain: Superoxide dismutase [Mn], mitochondrial (225 aa).

Residues 1-27 (MITAITRTALPRATLRTSLATMSTIRA) constitute a mitochondrion transit peptide. Residues His53, His101, Asp187, and His191 each coordinate Mn(2+).

Belongs to the iron/manganese superoxide dismutase family. It depends on Mn(2+) as a cofactor.

It localises to the mitochondrion. It is found in the cytoplasm. The enzyme catalyses 2 superoxide + 2 H(+) = H2O2 + O2. Its function is as follows. Destroys radicals which are normally produced within the cells and which are toxic to biological systems. In terms of biological role, destroys mitochondrial radicals produced by oxidative stress. Destroys cytoplasmic radicals produced in low copper environments; a condition which inactivates the cytoplasmic copper-dependent superoxide dismutase SOD1. The chain is Superoxide dismutase [Mn], mitochondrial from Cryptococcus neoformans var. grubii serotype A (strain H99 / ATCC 208821 / CBS 10515 / FGSC 9487) (Filobasidiella neoformans var. grubii).